The sequence spans 188 residues: F7-2 fimbrial protein (188 aa).

The N-terminal stretch at 1–21 (MIKSVIAGAVAMAVVSFGAYA) is a signal peptide. An intrachain disulfide couples cysteine 43 to cysteine 82.

The protein belongs to the fimbrial protein family.

It localises to the fimbrium. Its function is as follows. Fimbriae (also called pili), polar filaments radiating from the surface of the bacterium to a length of 0.5-1.5 micrometers and numbering 100-300 per cell, enable bacteria to colonize the epithelium of specific host organs. The chain is F7-2 fimbrial protein (F7-2) from Escherichia coli O6:H1 (strain CFT073 / ATCC 700928 / UPEC).